The chain runs to 444 residues: Tol-Pal system protein TolB (444 aa).

The signal sequence occupies residues 1 to 19 (MRNIIYFILSLLFSFASYA).

The protein belongs to the TolB family. The Tol-Pal system is composed of five core proteins: the inner membrane proteins TolA, TolQ and TolR, the periplasmic protein TolB and the outer membrane protein Pal. They form a network linking the inner and outer membranes and the peptidoglycan layer.

The protein resides in the periplasm. Its function is as follows. Part of the Tol-Pal system, which plays a role in outer membrane invagination during cell division and is important for maintaining outer membrane integrity. The chain is Tol-Pal system protein TolB from Rickettsia massiliae (strain Mtu5).